The sequence spans 392 residues: Ribosomal RNA large subunit methyltransferase G (392 aa).

The protein belongs to the methyltransferase superfamily. RlmG family.

The protein resides in the cytoplasm. The catalysed reaction is guanosine(1835) in 23S rRNA + S-adenosyl-L-methionine = N(2)-methylguanosine(1835) in 23S rRNA + S-adenosyl-L-homocysteine + H(+). Specifically methylates the guanine in position 1835 (m2G1835) of 23S rRNA. This Shewanella frigidimarina (strain NCIMB 400) protein is Ribosomal RNA large subunit methyltransferase G.